We begin with the raw amino-acid sequence, 575 residues long: Sclareol synthase, chloroplastic (575 aa).

The N-terminal 51 residues, 1 to 51, are a transit peptide targeting the chloroplast; it reads MSLAFNVGVTPFSGQRVGSRKEKFPVQGFPVTTPNRSRLIVNCSLTTIDFM. Residues D329, D333, N473, S477, and E481 each contribute to the Mg(2+) site. The DDXXD motif motif lies at 329 to 333; that stretch reads DDFFD.

It belongs to the terpene synthase family.

The protein resides in the plastid. The protein localises to the chloroplast. The catalysed reaction is 8-hydroxycopalyl diphosphate + H2O = sclareol + diphosphate. It functions in the pathway secondary metabolite biosynthesis; terpenoid biosynthesis. In terms of biological role, involved in the biosynthesis of labdane-type diterpenoid including sclareol, a diterpene-diol that is used as fragrance and flavoring, and has anticancer effects (able to kill leukemic and colon cancer cells by apoptosis). Sclareol can also be used as synthesis precursor of ambergris substitution fragance products such as ambrox. Terpene synthase that catalyzes the conversion of 8-hydroxy-copalyl diphosphate to sclareol. In Salvia sclarea (Clary sage), this protein is Sclareol synthase, chloroplastic.